We begin with the raw amino-acid sequence, 330 residues long: D-alanine--D-alanine ligase (330 aa).

The ATP-grasp domain occupies 120-326; the sequence is KLWYDALGIP…FKTFLQKAVL (207 aa). 150-205 provides a ligand contact to ATP; that stretch reads AFKQWGGLFVKAACQGSSVGCYKVTSEEELAQAINGAFGYSQQVLVEKAVKPRELE. Mg(2+) is bound by residues Asp280, Glu293, and Asn295.

This sequence belongs to the D-alanine--D-alanine ligase family. Mg(2+) is required as a cofactor. Mn(2+) serves as cofactor.

It localises to the cytoplasm. It carries out the reaction 2 D-alanine + ATP = D-alanyl-D-alanine + ADP + phosphate + H(+). It participates in cell wall biogenesis; peptidoglycan biosynthesis. In terms of biological role, cell wall formation. The protein is D-alanine--D-alanine ligase of Aliivibrio fischeri (strain MJ11) (Vibrio fischeri).